The sequence spans 839 residues: MGELFRSEEMTLAQLFLQSEAAYCCVSELGELGKVQFRDLNPDVNVFQRKFVNEVRRCEEMDRKLRFVEKEIRKANIPIMDTGENPEVPFPRDMIDLEANFEKIENELKEINTNQEALKRNFLELTELKFILRKTQQFFDEAELHHQQMADPDLLEESSSLLEPNEMGRGAPLRLGFVAGVINRERIPTFERMLWRVCRGNVFLRQAEIENPLEDPVTGDYVHKSVFIIFFQGDQLKNRVKKICEGFRASLYPCPETPQERKEMASGVNTRIDDLQMVLNQTEDHRQRVLQAAAKNIRVWFIKVRKMKAIYHTLNLCNIDVTQKCLIAEVWCPVTDLDSIQFALRRGTEHSGSTVPSILNRMQTNQTPPTYNKTNKFTHGFQNIVDAYGIGTYREINPAPYTVITFPFLFAVMFGDFGHGILMTLFAVWMVLRESRILSQKHENEMFSMVFSGRYIILLMGLFSIYTGLIYNDCFSKSLNIFGSSWSVRPMFTQGNWTEETLLGSSVLQLNPAIPGVFGGPYPFGIDPIWNIATNKLTFLNSFKMKMSVILGIIHMLFGVSLSLFNHIYFKKPLNIYFGFIPEIIFMSSLFGYLVILIFYKWTAYDAHSSRNAPSLLIHFINMFLFSYPESGNAMLYSGQKGIQCFLIVVAMLCVPWMLLFKPLILRHQYLRKKHLGTLNFGGIRVGNGPTEEDAEIIQHDQLSTHSEDAEEFDFGDTMVHQAIHTIEYCLGCISNTASYLRLWALSLAHAQLSEVLWTMVIHIGLHVRSLAGGLGLFFIFAAFATLTVAILLIMEGLSAFLHALRLHWVEFQNKFYTGTGFKFLPFSFEHIREGKFDE.

Topologically, residues 1–395 are cytoplasmic; the sequence is MGELFRSEEM…DAYGIGTYRE (395 aa). Residues T257 and T367 each carry the phosphothreonine modification. A Phosphotyrosine modification is found at Y371. Residues 396–414 traverse the membrane as a helical segment; sequence INPAPYTVITFPFLFAVMF. Over 415–416 the chain is Vacuolar; sequence GD. A helical membrane pass occupies residues 417–433; sequence FGHGILMTLFAVWMVLR. Residues 434–448 are Cytoplasmic-facing; that stretch reads ESRILSQKHENEMFS. A helical transmembrane segment spans residues 449–478; it reads MVFSGRYIILLMGLFSIYTGLIYNDCFSKS. Residues 479-542 are Vacuolar-facing; it reads LNIFGSSWSV…ATNKLTFLNS (64 aa). A helical membrane pass occupies residues 543-562; that stretch reads FKMKMSVILGIIHMLFGVSL. Topologically, residues 563–580 are cytoplasmic; it reads SLFNHIYFKKPLNIYFGF. Residues 581 to 601 form a helical membrane-spanning segment; it reads IPEIIFMSSLFGYLVILIFYK. The Vacuolar portion of the chain corresponds to 602–646; it reads WTAYDAHSSRNAPSLLIHFINMFLFSYPESGNAMLYSGQKGIQCF. A helical transmembrane segment spans residues 647 to 666; it reads LIVVAMLCVPWMLLFKPLIL. Residues 667 to 726 lie on the Cytoplasmic side of the membrane; the sequence is RHQYLRKKHLGTLNFGGIRVGNGPTEEDAEIIQHDQLSTHSEDAEEFDFGDTMVHQAIHT. The helical transmembrane segment at 727-751 threads the bilayer; that stretch reads IEYCLGCISNTASYLRLWALSLAHA. Residues 752-772 lie on the Vacuolar side of the membrane; the sequence is QLSEVLWTMVIHIGLHVRSLA. The helical transmembrane segment at 773–811 threads the bilayer; it reads GGLGLFFIFAAFATLTVAILLIMEGLSAFLHALRLHWVE. Residues 812-839 are Cytoplasmic-facing; sequence FQNKFYTGTGFKFLPFSFEHIREGKFDE.

Belongs to the V-ATPase 116 kDa subunit family. As to quaternary structure, V-ATPase is a heteromultimeric enzyme made up of two complexes: the ATP-hydrolytic V1 complex and the proton translocation V0 complex. The V1 complex consists of three catalytic AB heterodimers that form a heterohexamer, three peripheral stalks each consisting of EG heterodimers, one central rotor including subunits D and F, and the regulatory subunits C and H. The proton translocation complex V0 consists of the proton transport subunit a, a ring of proteolipid subunits c9c'', rotary subunit d, subunits e and f, and the accessory subunits ATP6AP1/Ac45 and ATP6AP2/PRR. Interacts with SPAAR. As to expression, predominantly expressed in neurons in the cortex and in the dentate gyrus, CA1 and CA3 regions of the hippocampus (at protein level). Expressed at lower levels in astrocytes, oligodendrocytes and microglia (at protein level). In the cerebellum, present in Purkinje and granule cells (at protein level).

It localises to the cytoplasmic vesicle. It is found in the clathrin-coated vesicle membrane. The protein resides in the secretory vesicle. The protein localises to the synaptic vesicle membrane. Its subcellular location is the melanosome. Its function is as follows. Subunit of the V0 complex of vacuolar(H+)-ATPase (V-ATPase), a multisubunit enzyme composed of a peripheral complex (V1) that hydrolyzes ATP and a membrane integral complex (V0) that translocates protons. V-ATPase is responsible for the acidification of various organelles, such as lysosomes, endosomes, the trans-Golgi network, and secretory granules, including synaptic vesicles. In certain cell types, can be exported to the plasma membrane, where it is involved in the acidification of the extracellular environment. Required for assembly and activity of the vacuolar ATPase. Through its action on compartment acidification, plays an essential role in neuronal development in terms of integrity and connectivity of neurons. In Mus musculus (Mouse), this protein is V-type proton ATPase 116 kDa subunit a 1 (Atp6v0a1).